Consider the following 346-residue polypeptide: Acetylserotonin O-methyltransferase (346 aa).

Residues Tyr-148, Trp-165, Asp-211, 236–238 (GDF), and Lys-253 contribute to the S-adenosyl-L-methionine site. His-256 serves as the catalytic Proton donor/acceptor. Substrate is bound by residues Asp-257, Asn-303, and Gln-307.

The protein belongs to the class I-like SAM-binding methyltransferase superfamily. Cation-independent O-methyltransferase family. As to quaternary structure, homodimer. As to expression, expressed in pineal gland and retina.

It carries out the reaction N-acetylserotonin + S-adenosyl-L-methionine = melatonin + S-adenosyl-L-homocysteine + H(+). Its pathway is aromatic compound metabolism; melatonin biosynthesis; melatonin from serotonin: step 1/2. In terms of biological role, catalyzes the transfer of a methyl group onto N-acetylserotonin, producing melatonin (N-acetyl-5-methoxytryptamine). The chain is Acetylserotonin O-methyltransferase (ASMT) from Gallus gallus (Chicken).